The primary structure comprises 774 residues: FT-interacting protein 7 (774 aa).

Residues 1-17 are compositionally biased toward basic and acidic residues; it reads MMQRPFRPEEYSLKETS. Residues 1-25 form a disordered region; sequence MMQRPFRPEEYSLKETSPHLGGGAA. C2 domains are found at residues 23–143, 182–305, and 346–472; these read GAAG…PQWY, IPGD…SQWY, and YSSD…THAY. Ca(2+) is bound by residues Asp56, Asp62, Asp109, Asp111, and Asp116. A run of 3 helical transmembrane segments spans residues 575–595, 606–626, and 714–734; these read IMGV…ICHW, ILFV…FLYL, and ATAL…VTPF.

It belongs to the MCTP family. Interacts with OSH1. Ca(2+) serves as cofactor. As to expression, expressed in roots, stems, lemma, palea, pistils and ovules. Expressed at low levels in leaves.

Its subcellular location is the cell membrane. Its function is as follows. Promotes nuclear translocation of the transcription factor OSH1, which directly suppresses the auxin biosynthetic gene YUCCA4 during the late development of anthers. Reduction of auxin levels at late stage of anther development, after meiosis of microspore mother cells, is necessary for normal anther dehiscence and seed setting. Required for jasmonate (JA) biosynthetic genes expression and JA production in anthers. The chain is FT-interacting protein 7 from Oryza sativa subsp. japonica (Rice).